A 341-amino-acid polypeptide reads, in one-letter code: Processive diacylglycerol beta-glycosyltransferase (341 aa).

The protein belongs to the glycosyltransferase 2 family. Mg(2+) serves as cofactor.

The protein localises to the cell membrane. It carries out the reaction a 1,2-diacyl-sn-glycerol + UDP-alpha-D-glucose = a 1,2-diacyl-3-O-(beta-D-glucopyranosyl)-sn-glycerol + UDP + H(+). The catalysed reaction is a 1,2-diacyl-sn-glycerol + UDP-alpha-D-galactose = a 1,2-diacyl-3-O-(beta-D-galactosyl)-sn-glycerol + UDP + H(+). The enzyme catalyses a 1,2-diacyl-3-O-(beta-D-galactosyl)-sn-glycerol + UDP-alpha-D-glucose = a 1,2-diacyl-3-O-[beta-D-glucopyranosyl-(1-&gt;6)-beta-D-galactopyranosyl]-sn-glycerol + UDP + H(+). It catalyses the reaction a 1,2-diacyl-3-O-(beta-D-galactosyl)-sn-glycerol + UDP-alpha-D-galactose = a 1,2-diacyl-3-O-[beta-D-galactosyl-(1-&gt;6)-beta-D-galactosyl]-sn-glycerol + UDP + H(+). Activated by the negatively charged lipid phosphatidylglycerol (PG). Processive glycosyltransferase involved in the biosynthesis of both the non-bilayer-prone beta-monoglycosyldiacylglycerol and the bilayer-forming membrane lipid glucosyl-galactosyldiacylglycerol and digalactosyl-diacylglycerol. These components contribute to regulate the properties and stability of the membrane. Catalyzes sequentially the transfers of glucosyl or galactosyl residues from UDP-Glc or UDP-Gal to diacylglycerol (DAG) acceptor to form the corresponding beta-glycosyl-DAG (3-O-(beta-D-glycopyranosyl)-1,2-diacyl-sn-glycerol). Then, only beta-galactosyl-DAG (3-O-(beta-D-galactopyranosyl)-1,2-diacyl-sn-glycerol) can act as acceptor to give the beta-glycosyl-beta-galactosyl-DAG product (3-O-(beta-D-glycopyranosyl-(1-&gt;6)-D-galactopyranosyl)-1,2-diacyl-sn-glycerol). It can also use alpha-Gal-beta-Gal-DAG, ceramide (Cer) and beta-Gal-Cer as sugar acceptors. The enzyme is supposed to be mainly a galactosyltransferase, with higher glycosyltransferase activity for the addition of the second glycosyl on beta-Gal-DAG as acceptor. The main glycolipid produced in vivo is beta-Glc-beta-Gal-DAG with a beta-1,6 linkage. The protein is Processive diacylglycerol beta-glycosyltransferase of Mycoplasma pneumoniae (strain ATCC 29342 / M129 / Subtype 1) (Mycoplasmoides pneumoniae).